We begin with the raw amino-acid sequence, 441 residues long: Tubulin beta chain, nucleomorph (441 aa).

8 residues coordinate GTP: Gln11, Glu69, Ser138, Gly142, Thr143, Gly144, Asn204, and Asn226. Glu69 is a binding site for Mg(2+).

It belongs to the tubulin family. As to quaternary structure, dimer of alpha and beta chains. A typical microtubule is a hollow water-filled tube with an outer diameter of 25 nm and an inner diameter of 15 nM. Alpha-beta heterodimers associate head-to-tail to form protofilaments running lengthwise along the microtubule wall with the beta-tubulin subunit facing the microtubule plus end conferring a structural polarity. Microtubules usually have 13 protofilaments but different protofilament numbers can be found in some organisms and specialized cells. The cofactor is Mg(2+).

In terms of biological role, tubulin is the major constituent of microtubules, a cylinder consisting of laterally associated linear protofilaments composed of alpha- and beta-tubulin heterodimers. Microtubules grow by the addition of GTP-tubulin dimers to the microtubule end, where a stabilizing cap forms. Below the cap, tubulin dimers are in GDP-bound state, owing to GTPase activity of alpha-tubulin. The chain is Tubulin beta chain, nucleomorph (tubB) from Guillardia theta (Cryptophyte).